Here is a 449-residue protein sequence, read N- to C-terminus: MFS-type transporter hasB (449 aa).

The next 12 membrane-spanning stretches (helical) occupy residues 44–64 (VAGS…CGIF), 80–100 (ALAW…PAVG), 112–132 (LPPF…CTKY), 135–155 (VMLA…LPAM), 168–188 (LAVG…PCML), 195–215 (VGFA…LFIA), 255–275 (LPWG…FAPL), 296–316 (AIAN…SDII), 322–342 (MCIV…PLEF), 346–366 (LAGI…FVSL), 387–407 (GGFC…EGAI), and 415–435 (FTGL…CTGT).

It belongs to the major facilitator superfamily. Monocarboxylate porter (TC 2.A.1.13) family.

It is found in the membrane. MFS-type transporter; part of the gene cluster that mediates the biosynthesis of hexadehydro-astechrome (HAS), a tryptophan-derived iron(III)-complex that acts as a virulence factor in infected mice. Required for the production of HAS. This chain is MFS-type transporter hasB, found in Aspergillus fumigatus (strain CBS 144.89 / FGSC A1163 / CEA10) (Neosartorya fumigata).